The primary structure comprises 36 residues: Photosystem I reaction center subunit VIII (36 aa).

Residues 10–30 (FVPLVGLVFSAIIMVLSFLYI) traverse the membrane as a helical segment.

It belongs to the PsaI family.

It is found in the plastid. Its subcellular location is the chloroplast thylakoid membrane. Functionally, may help in the organization of the PsaL subunit. In Welwitschia mirabilis (Tree tumbo), this protein is Photosystem I reaction center subunit VIII.